The chain runs to 168 residues: Putative postmeiotic segregation increased 2-like protein 3 (168 aa).

The KRAB domain maps to 8–84; sequence VSFKDVAVDF…EGEFPCQHSP (77 aa).

It belongs to the DNA mismatch repair MutL/HexB family.

The sequence is that of Putative postmeiotic segregation increased 2-like protein 3 (PMS2P3) from Homo sapiens (Human).